The following is a 333-amino-acid chain: MYHSAKRRSSSRLMMFIIALIIFIFGLGLNLSVGASDISIIDSLKYLFVWDGSKEQLIISTLRLPRTLIGVFVGASLAVAGALMQAMTRNPLASPQIFGVNAGASLFVVASLVILPASPYSSVIFAFAGAAAGGAIVYMIASSGGMTPVKLALSGMAVHLFLSSMTQAIIILNESGEDVLYWMTGAIDGSNWQDVITIAPFSVIGIGLALVFSGSVSVLGLGDETAKGLGQNMNGIRILISLIILILSGASVAVAGPIGFVGLLVPHIVRKLIGEHYQYVLPFSALFGAILLVYADVLARWIAFPYESPVGIVTAIIGTPFFLYLARKGRNLK.

9 consecutive transmembrane segments (helical) span residues 13 to 33 (LMMFIIALIIFIFGLGLNLSV), 67 to 87 (TLIGVFVGASLAVAGALMQAM), 97 to 117 (IFGVNAGASLFVVASLVILPA), 121 to 141 (SSVIFAFAGAAAGGAIVYMIA), 151 to 171 (LALSGMAVHLFLSSMTQAIII), 201 to 221 (FSVIGIGLALVFSGSVSVLGL), 238 to 258 (ILISLIILILSGASVAVAGPI), 279 to 299 (YVLPFSALFGAILLVYADVLA), and 302 to 322 (IAFPYESPVGIVTAIIGTPFF).

Belongs to the binding-protein-dependent transport system permease family. FecCD subfamily. In terms of assembly, the complex is composed of one ATP-binding protein (YfmF), two transmembrane proteins (YfmD and YfmE) and a solute-binding protein (YfmC).

It localises to the cell membrane. Functionally, part of the ABC transporter complex YfmCDEF involved in citrate-dependent Fe(3+) import. Involved in the translocation of the substrate across the membrane. The sequence is that of Fe(3+)-citrate import system permease protein YfmD (yfmD) from Bacillus subtilis (strain 168).